A 224-amino-acid polypeptide reads, in one-letter code: MSQTKALKVRVTLFCILVGIVLALVAVVTDHWAVLSPHVEHLNATCEAAHFGLWRICTKRIAVGDSKDKSCGPITLPGEKNCSYFRHFNPGETSEIFHVTTQKEYSISAAAIAIFSLGFIILGTICGLLSFRKKRDYLLRPASMFYAFAGLCIFVSVEVMRQSVKRMIDSEDTVWIDYYYGWSFACACAAFILLFLGGIALLLFSLPRMPQYPWESCMDAEPEH.

Residues 1–10 are Cytoplasmic-facing; it reads MSQTKALKVR. A helical membrane pass occupies residues 11–29; that stretch reads VTLFCILVGIVLALVAVVT. The Extracellular portion of the chain corresponds to 30 to 110; the sequence is DHWAVLSPHV…TQKEYSISAA (81 aa). N-linked (GlcNAc...) asparagine glycosylation is found at N43 and N81. Residues C57 and C82 are joined by a disulfide bond. Residues 111–131 traverse the membrane as a helical segment; that stretch reads AIAIFSLGFIILGTICGLLSF. Topologically, residues 132-136 are cytoplasmic; sequence RKKRD. The helical transmembrane segment at 137–157 threads the bilayer; it reads YLLRPASMFYAFAGLCIFVSV. Over 158 to 181 the chain is Extracellular; it reads EVMRQSVKRMIDSEDTVWIDYYYG. The helical transmembrane segment at 182 to 206 threads the bilayer; that stretch reads WSFACACAAFILLFLGGIALLLFSL. Over 207-224 the chain is Cytoplasmic; that stretch reads PRMPQYPWESCMDAEPEH.

This sequence belongs to the PMP-22/EMP/MP20 family. CACNG subfamily. In terms of assembly, component of a calcium channel complex consisting of a pore-forming alpha subunit (CACNA1S) and the ancillary subunits CACNB1 or CACNB2, CACNG1 and CACNA2D1. The channel complex contains alpha, beta, gamma and delta subunits in a 1:1:1:1 ratio, i.e. it contains either CACNB1 or CACNB2. Post-translationally, N-glycosylated.

The protein resides in the cell membrane. It localises to the sarcolemma. Its function is as follows. Regulatory subunit of the voltage-gated calcium channel that gives rise to L-type calcium currents in skeletal muscle. Regulates channel inactivation kinetics. The protein is Voltage-dependent calcium channel gamma-1 subunit (CACNG1) of Sus scrofa (Pig).